A 506-amino-acid chain; its full sequence is Transforming growth factor beta-1-induced transcript 1 protein (506 aa).

Residues 3–15 (DLDALLADLQITT) carry the LD motif 1 motif. The segment at 15-62 (TPPRCPVLLTDSPEKPQPTETRPPPPPYDPKTAMSNKTSDHETFPVDK) is disordered. Positions 52-62 (TSDHETFPVDK) are enriched in basic and acidic residues. 2 consecutive short sequence motifs (LD motif) follow at residues 87–99 (ELDR…NATQ) and 139–150 (ELDRLMASLSDF). Disordered regions lie at residues 154 to 201 (NTVS…PTPK) and 221 to 244 (SDEV…ATSV). Positions 168 to 177 (GSEEVSRPGD) are enriched in basic and acidic residues. An LD motif 4 motif is present at residues 248–260 (DLDSMLVKLQSGL). 4 consecutive LIM zinc-binding domains span residues 271–330 (GLCE…LYAP), 331–388 (RCAL…RLFG), 389–448 (AVCA…RRGS), and 449–506 (LCAG…RLYG).

It belongs to the paxillin family. As to quaternary structure, interacts with tcf3 and tcf7l2.

It is found in the cell junction. The protein resides in the focal adhesion. It localises to the nucleus matrix. Its subcellular location is the cytoplasm. The protein localises to the cytoskeleton. In terms of biological role, functions as a molecular adapter coordinating multiple protein-protein interactions at the focal adhesion complex and in the nucleus. May regulate both Wnt and steroid signaling pathways and play a role in the processes of cell growth, proliferation, migration, differentiation and senescence. May have a zinc-dependent DNA-binding activity. In Xenopus laevis (African clawed frog), this protein is Transforming growth factor beta-1-induced transcript 1 protein (tgfb1i1).